A 1767-amino-acid chain; its full sequence is Endo-alpha-N-acetylgalactosaminidase (1767 aa).

The signal sequence occupies residues 1–39 (MNKGLFEKRCKYSIRKFSLGVASVMIGATFFGTSPVLAD). 2 stretches are compositionally biased toward basic and acidic residues: residues 63 to 75 (NDGHDFEAPKVGE) and 84 to 111 (DGPKTEEELLALEKEKPAEEKPKEDKPA). Disordered regions lie at residues 63–137 (NDGH…QGTV) and 301–324 (VKTDNQEGVKTEDTPAEKETGPEV). The segment covering 112–124 (AAKPETPKTVTPE) has biased composition (low complexity). Basic and acidic residues-rich tracts occupy residues 127-137 (TVEKKEQQGTV) and 304-324 (DNQEGVKTEDTPAEKETGPEV). Positions 577, 579, 581, 583, and 588 each coordinate Ca(2+). The catalytic stretch occupies residues 602 to 893 (GWKKVKDITA…DVMTKYFQHF (292 aa)). Asp-658 serves as a coordination point for substrate. Asp-764 functions as the Nucleophile in the catalytic mechanism. Glu-796 functions as the Proton donor/acceptor in the catalytic mechanism. Ca(2+)-binding residues include Asp-1233, Glu-1235, Glu-1281, Trp-1284, and Asp-1411. The LPXTG sorting signal signature appears at 1735 to 1739 (LPATG). Position 1738 is a pentaglycyl murein peptidoglycan amidated threonine (Thr-1738). The propeptide at 1739–1767 (GESQFDTALFLASVSLALSALFVVKTKKD) is removed by sortase.

Belongs to the glycosyl hydrolase 101 family. A subfamily.

It localises to the secreted. The protein localises to the cell wall. It carries out the reaction a 3-O-[beta-D-galactosyl-(1-&gt;3)-N-acetyl-alpha-D-galactosaminyl]-L-threonyl-[protein] + H2O = beta-D-galactosyl-(1-&gt;3)-N-acetyl-D-galactosamine + L-threonyl-[protein]. It catalyses the reaction a 3-O-[beta-D-galactosyl-(1-&gt;3)-N-acetyl-alpha-D-galactosaminyl]-L-seryl-[protein] + H2O = beta-D-galactosyl-(1-&gt;3)-N-acetyl-D-galactosamine + L-seryl-[protein]. Its function is as follows. Involved in the breakdown of mucin-type O-linked glycans. Specifically removes the T-antigen disaccharide (Gal-beta-1,3-GalNAc-alpha) from extracellular host glycoproteins. Representative of a broadly important class of virulence factors. This Streptococcus pneumoniae (strain ATCC BAA-255 / R6) protein is Endo-alpha-N-acetylgalactosaminidase.